Reading from the N-terminus, the 315-residue chain is Lipoyl synthase (315 aa).

The [4Fe-4S] cluster site is built by Cys-63, Cys-68, Cys-74, Cys-89, Cys-93, Cys-96, and Ser-303. Residues 75–292 form the Radical SAM core domain; it reads FSKGTATFMI…EEKAYEMGFV (218 aa).

The protein belongs to the radical SAM superfamily. Lipoyl synthase family. [4Fe-4S] cluster serves as cofactor.

It is found in the cytoplasm. The catalysed reaction is [[Fe-S] cluster scaffold protein carrying a second [4Fe-4S](2+) cluster] + N(6)-octanoyl-L-lysyl-[protein] + 2 oxidized [2Fe-2S]-[ferredoxin] + 2 S-adenosyl-L-methionine + 4 H(+) = [[Fe-S] cluster scaffold protein] + N(6)-[(R)-dihydrolipoyl]-L-lysyl-[protein] + 4 Fe(3+) + 2 hydrogen sulfide + 2 5'-deoxyadenosine + 2 L-methionine + 2 reduced [2Fe-2S]-[ferredoxin]. The protein operates within protein modification; protein lipoylation via endogenous pathway; protein N(6)-(lipoyl)lysine from octanoyl-[acyl-carrier-protein]: step 2/2. Its function is as follows. Catalyzes the radical-mediated insertion of two sulfur atoms into the C-6 and C-8 positions of the octanoyl moiety bound to the lipoyl domains of lipoate-dependent enzymes, thereby converting the octanoylated domains into lipoylated derivatives. This is Lipoyl synthase from Chromobacterium violaceum (strain ATCC 12472 / DSM 30191 / JCM 1249 / CCUG 213 / NBRC 12614 / NCIMB 9131 / NCTC 9757 / MK).